A 149-amino-acid polypeptide reads, in one-letter code: uncharacterized protein (149 aa).

The span at 130 to 144 shows a compositional bias: basic and acidic residues; sequence ESNVTKENIEIKEEK. The tract at residues 130–149 is disordered; sequence ESNVTKENIEIKEEKEENSE.

This is an uncharacterized protein from Methanocaldococcus jannaschii (strain ATCC 43067 / DSM 2661 / JAL-1 / JCM 10045 / NBRC 100440) (Methanococcus jannaschii).